Reading from the N-terminus, the 233-residue chain is Isoprenyl transferase (233 aa).

Asp-12 is a catalytic residue. Mg(2+) is bound at residue Asp-12. Substrate is bound by residues 13–16, Trp-17, Arg-25, His-29, and 57–59; these read GNGR and STE. Asn-60 (proton acceptor) is an active-site residue. Substrate contacts are provided by residues Trp-61, Arg-63, Arg-178, and 184–186; that span reads RLS. Glu-197 is a Mg(2+) binding site.

It belongs to the UPP synthase family. As to quaternary structure, homodimer. Mg(2+) serves as cofactor.

Its function is as follows. Catalyzes the condensation of isopentenyl diphosphate (IPP) with allylic pyrophosphates generating different type of terpenoids. The chain is Isoprenyl transferase from Thermotoga maritima (strain ATCC 43589 / DSM 3109 / JCM 10099 / NBRC 100826 / MSB8).